A 291-amino-acid chain; its full sequence is Protein ZAR1-like (291 aa).

Residues 103–152 (GSQTLHSSSLSDRTSSRKPTEAWEVGRRALIRRPQDGEDEESQEELTGPT) are disordered. Low complexity predominate over residues 106-115 (TLHSSSLSDR). The span at 116–129 (TSSRKPTEAWEVGR) shows a compositional bias: basic and acidic residues. A 3CxxC-type zinc finger spans residues 195-280 (LKYGYFHCKD…QELCGHCKDK (86 aa)).

The protein belongs to the ZAR1 family. In terms of assembly, interacts with YBX2. As to expression, expressed in oocytes and zygotes. Predominantly expressed in maturing oocytes before maternal-to-zygotic transition (MZT). Less abundant than Zar1.

The protein localises to the cytoplasm. Its subcellular location is the cytoplasmic ribonucleoprotein granule. Functionally, mRNA-binding protein required for maternal mRNA storage, translation and degradation during oocyte maturation. Probably promotes formation of some phase-separated membraneless compartment that stores maternal mRNAs in oocytes: acts by undergoing liquid-liquid phase separation upon binding to maternal mRNAs. Binds to the 3'-UTR of maternal mRNAs, inhibiting their translation. In Mus musculus (Mouse), this protein is Protein ZAR1-like.